We begin with the raw amino-acid sequence, 742 residues long: ATP-dependent RNA helicase DBP7 (742 aa).

The segment at Gly-45–Thr-100 is disordered. Residues Asp-143–Lys-172 carry the Q motif motif. The 195-residue stretch at Ile-178–Ile-372 folds into the Helicase ATP-binding domain. Position 191 to 198 (Ala-191 to Thr-198) interacts with ATP. The short motif at Asp-307 to Asp-310 is the DEGD box element. Residues Thr-405–Asn-605 enclose the Helicase C-terminal domain. The disordered stretch occupies residues Ala-701–Phe-726. Residues Gly-710–Lys-722 show a composition bias toward basic and acidic residues.

Belongs to the DEAD box helicase family. DDX31/DBP7 subfamily.

The protein resides in the nucleus. It is found in the nucleolus. It carries out the reaction ATP + H2O = ADP + phosphate + H(+). In terms of biological role, ATP-binding RNA helicase involved in the biogenesis of 60S ribosomal subunits and is required for the normal formation of 25S and 5.8S rRNAs. This is ATP-dependent RNA helicase DBP7 (DBP7) from Saccharomyces cerevisiae (strain ATCC 204508 / S288c) (Baker's yeast).